Reading from the N-terminus, the 91-residue chain is Small ribosomal subunit protein bS20 (91 aa).

The segment covering Met1–Asn21 has biased composition (basic and acidic residues). 2 disordered regions span residues Met1–Lys25 and Asn71–Asp91.

Belongs to the bacterial ribosomal protein bS20 family.

Its function is as follows. Binds directly to 16S ribosomal RNA. This chain is Small ribosomal subunit protein bS20, found in Prosthecochloris aestuarii (strain DSM 271 / SK 413).